The primary structure comprises 224 residues: Ribonuclease T (224 aa).

Residues 32-206 enclose the Exonuclease domain; it reads VVVDVETGGF…YDTEKTAELF (175 aa). Mg(2+) is bound by residues Asp-35, Glu-37, His-193, and Asp-198. His-193 functions as the Proton donor/acceptor in the catalytic mechanism.

Belongs to the RNase T family. As to quaternary structure, homodimer. The cofactor is Mg(2+).

Trims short 3' overhangs of a variety of RNA species, leaving a one or two nucleotide 3' overhang. Responsible for the end-turnover of tRNA: specifically removes the terminal AMP residue from uncharged tRNA (tRNA-C-C-A). Also appears to be involved in tRNA biosynthesis. The sequence is that of Ribonuclease T from Pseudomonas paraeruginosa (strain DSM 24068 / PA7) (Pseudomonas aeruginosa (strain PA7)).